A 597-amino-acid chain; its full sequence is MNKETGMLKPWIEAQARLVEVAAGRAPADLVIRGGQWVNVHTREVIPGMDVAVADGRVAYVGPDAGPSVGPGTQVIEADGRFMVPGLIDAHMHVESGMLTPAGFAAAVIPHGTTTIFHDPHEIANVLGLEGVRLMRDESLLQPISMFTQMPSCAPSAPGLETTGQPITEGEVAQAMGWDGIVGLGEMMNFPGVASGDRQMLTEIAATRAAGKTVGGHYASPDLGRPFHAYVAGGANDDHETTTEAQGIARVRQGMGCMMRLGSAWYDVESQITAITEKGLDPRFFILCTDDSHSGTLVNDGHMNRVVRHAVDCGCDPLVAIQMATINAASHFGLERELGSITPGRRADVILTSDLRSLPIETVIAQGVVVAETGKLLVDCPRIAWPEAARDSVHLGRSLTGADFAVRATGDSARVRVIGVVENQAPTRALTAQLPIRDGVVEPQGETCHIALVERHRGTGGVVNGFVSGFGYQGRMAVASTVAHDSHHMIVVGTDRDSMAAAANHLGRIGGGVTVFRDGEELATVALPIAGLMSDRPAAEVAEAAQGIVKAMQDCGCTLNNAYMQHSLLALVVIPELRISDLGIVDVTRFELVDLMV.

This sequence belongs to the metallo-dependent hydrolases superfamily. Adenine deaminase family. It depends on Mn(2+) as a cofactor.

The catalysed reaction is adenine + H2O + H(+) = hypoxanthine + NH4(+). In Paracoccus denitrificans (strain Pd 1222), this protein is Adenine deaminase.